A 757-amino-acid chain; its full sequence is Polyribonucleotide nucleotidyltransferase (757 aa).

Mg(2+) contacts are provided by Asp-525 and Asp-531. The region spanning 591 to 650 is the KH domain; it reads PRVISVNIPVDKIGELIGPKGKTINAIQDETGADISIEEDGAVYIGAVDGPSAEAARAQV. An S1 motif domain is found at 662-734; sequence GESFLGTVVK…DRGKLSLAPV (73 aa). The disordered stretch occupies residues 736-757; the sequence is EEAADQEGSAAASDGPEAPAEG.

The protein belongs to the polyribonucleotide nucleotidyltransferase family. Mg(2+) serves as cofactor.

The protein resides in the cytoplasm. It carries out the reaction RNA(n+1) + phosphate = RNA(n) + a ribonucleoside 5'-diphosphate. Involved in mRNA degradation. Catalyzes the phosphorolysis of single-stranded polyribonucleotides processively in the 3'- to 5'-direction. This is Polyribonucleotide nucleotidyltransferase from Clavibacter sepedonicus (Clavibacter michiganensis subsp. sepedonicus).